The chain runs to 1485 residues: Cystic fibrosis transmembrane conductance regulator (1485 aa).

Over 1–78 (MQRSPVEDAN…SLLRAMARCY (78 aa)) the chain is Cytoplasmic. The helical transmembrane segment at 79–99 (IKPFLLFGFLLYIGEATKTVQ) threads the bilayer. The region spanning 83 to 353 (LLFGFLLYIG…CMVLRMTVTR (271 aa)) is the ABC transmembrane type-1 1 domain. The Extracellular portion of the chain corresponds to 100–123 (PQLLGRIIASFDPAHEPERANGYF). The chain crosses the membrane as a helical span at residues 124-149 (LAFGLGLLFTARFLLLQPAMFGLHHL). At 150 to 195 (GMQIRIALFSIIYKKTLKLSSRVLDKISTGQLVSLMSANLGKFDQS) the chain is on the cytoplasmic side. A helical membrane pass occupies residues 196–216 (LGMAHFIWISPLQCILCTGLI). The Extracellular portion of the chain corresponds to 217-224 (WELIDVNS). A helical membrane pass occupies residues 225–245 (FCALAAISLLGVLQAFLSHKM). Topologically, residues 246–299 (GPYKAQKVLLTNKRLALTSEIMENLHSVKAYGWEEIMETLIKNIRQDEVKLTRK) are cytoplasmic. Residues 300 to 320 (IGSLRYFYSSAYFFSAIFVIV) traverse the membrane as a helical segment. Over 321–340 (AAVVPHALSRGINLRRIFTT) the chain is Extracellular. The chain crosses the membrane as a helical span at residues 341-363 (LSYCMVLRMTVTRQLPGSIQMWY). The Cytoplasmic segment spans residues 364–856 (DTMRLIWKIE…YVRYVSNNKS (493 aa)). ATP-binding positions include tryptophan 402, 457–464 (GSMGSGKS), and glutamine 492. Residues 424–645 (NGDAGLFFTN…RPDFSSLLLG (222 aa)) enclose the ABC transporter 1 domain. Residues 653 to 826 (SAERRCSILT…GILEEENIEA (174 aa)) form a disordered R region region. A helical membrane pass occupies residues 857 to 877 (LLYVLIFILFIAAIEIAGSVA). Positions 860–1163 (VLIFILFIAA…CVATSIAVDG (304 aa)) constitute an ABC transmembrane type-1 2 domain. The Extracellular portion of the chain corresponds to 878-924 (GIFLITDELWREEHQRSEPNMTKHSNASSSGQTYAITVTPTSSYYIL). 2 N-linked (GlcNAc...) asparagine glycosylation sites follow: asparagine 897 and asparagine 903. A discontinuously helical transmembrane segment spans residues 925 to 946 (YIYVATSESLLAMGFFRGLPFV). Residues 947-996 (HTTITISKKLHQKMLHAVLSAPMSVLNTMKTGRIMNRFTKDMATIDDMLP) lie on the Cytoplasmic side of the membrane. A helical membrane pass occupies residues 997–1019 (LLMFDFVQLTVVVVGCILVVSIV). Topologically, residues 1020–1021 (RP) are extracellular. A helical transmembrane segment spans residues 1022 to 1042 (YIFLAATPLAIIFIVMRKYFL). The Cytoplasmic portion of the chain corresponds to 1043–1103 (RTGQQLKQLE…TATWFLYLST (61 aa)). A helical transmembrane segment spans residues 1104 to 1124 (LRWFLFRADILFVFFFTLAAW). The Extracellular portion of the chain corresponds to 1125–1138 (IAVGTNQDKPGEIG). A helical membrane pass occupies residues 1139–1159 (IIICLAMLILGTFQWCVATSI). The Cytoplasmic portion of the chain corresponds to 1160–1485 (AVDGMMRSVD…AEDNIQDTRL (326 aa)). The 234-residue stretch at 1211 to 1444 (IEVRNLTVKY…TSHLKQAISP (234 aa)) folds into the ABC transporter 2 domain. ATP contacts are provided by residues tyrosine 1220 and 1245-1252 (GRTGSGKS). The disordered stretch occupies residues 1452-1485 (PRRNSSMRTPQSKLSSVTQTLQEEAEDNIQDTRL). The span at 1454–1473 (RNSSMRTPQSKLSSVTQTLQ) shows a compositional bias: polar residues. The span at 1474–1485 (EEAEDNIQDTRL) shows a compositional bias: acidic residues. The PDZ-binding signature appears at 1483-1485 (TRL).

It belongs to the ABC transporter superfamily. ABCC family. CFTR transporter (TC 3.A.1.202) subfamily. Monomer; does not require oligomerization for channel activity. Interacts with cse1l; this interaction may down-regulate cftr activity. Post-translationally, phosphorylated; this activates the channel. Dephosphorylation strongly decreases ATPase activity. Phosphorylation at PKA sites activates the channel. Phosphorylation at PKC sites enhances the response to phosphorylation by PKA. As to expression, detected in gut epithelium (at protein level). Detected in kidney, spleen, intestine and liver. Detected in pancreatic duct epithelium at 5 dpf and throughout adult life.

Its subcellular location is the apical cell membrane. The protein localises to the early endosome membrane. The protein resides in the cell membrane. It localises to the recycling endosome membrane. It is found in the endoplasmic reticulum membrane. The enzyme catalyses ATP + H2O + closed Cl(-) channel = ADP + phosphate + open Cl(-) channel.. It carries out the reaction chloride(in) = chloride(out). It catalyses the reaction hydrogencarbonate(in) = hydrogencarbonate(out). The catalysed reaction is ATP + H2O = ADP + phosphate + H(+). Epithelial ion channel that plays an important role in the regulation of epithelial ion and water transport and fluid homeostasis. Mediates the transport of chloride ions across the cell membrane. Possesses an intrinsic ATPase activity and utilizes ATP to gate its channel; the passive flow of anions through the channel is gated by cycles of ATP binding and hydrolysis by the ATP-binding domains. The ion channel is also permeable to HCO(3)(-); selectivity depends on the extracellular chloride concentration. Exerts its function also by modulating the activity of other ion channels and transporters. Contributes to the regulation of the pH and the ion content of the epithelial fluid layer. Required for normal fluid homeostasis in the gut. Required for normal volume expansion and cell shape changes of Kupffer's vesicle during embryonic development and for normal establishment of left-right body patterning. Required for normal resistance to infection by P.aeruginosa strain PA14 and strain SMC573. The chain is Cystic fibrosis transmembrane conductance regulator from Danio rerio (Zebrafish).